Here is a 925-residue protein sequence, read N- to C-terminus: Neuropilin-2 (925 aa).

The signal sequence occupies residues 1-22 (MDMFPLTWIFLALYFSGHKVRS). The Extracellular segment spans residues 23 to 858 (QQDPPCGGRL…EKSWLYTLDP (836 aa)). Cystine bridges form between C28–C55, C83–C105, and C149–C175. 2 consecutive CUB domains span residues 28–142 (CGGR…YEIF) and 149–267 (CSKN…YYLV). N-linked (GlcNAc...) asparagine glycans are attached at residues N152 and N157. Ca(2+) contacts are provided by E197, D211, and D252. The cysteines at positions 208 and 230 are disulfide-linked. 2 disulfide bridges follow: C277/C427 and C434/C592. 2 F5/8 type C domains span residues 277–427 (CNAP…LFGC) and 434–592 (CSNM…VLGC). Residues 297 to 310 (STFSDGRWTPQQSR) show a composition bias toward polar residues. The segment at 297-317 (STFSDGRWTPQQSRLHGDDNG) is disordered. Residues 601–621 (VETLGPTVKSEETTTPYPMDE) are disordered. Residue N629 is glycosylated (N-linked (GlcNAc...) asparagine). In terms of domain architecture, MAM spans 642-802 (SGFNCNFDFP…TDVPLENCME (161 aa)). Positions 820–830 (YEDEIDDDYEG) are enriched in acidic residues. Positions 820–849 (YEDEIDDDYEGDWNNSSSTSGAGSPSSGKE) are disordered. N-linked (GlcNAc...) asparagine glycans are attached at residues N833 and N834. Residues 835–846 (SSSTSGAGSPSS) are compositionally biased toward low complexity. The helical transmembrane segment at 859 to 883 (ILITIIAMSSLGVLLGATCAGLLLY) threads the bilayer. Residues 884 to 925 (CTCSYSGLSSRSCTTLENYNFELYDGLKHKVKINHQKCCSEA) lie on the Cytoplasmic side of the membrane.

This sequence belongs to the neuropilin family. Heterodimer with NRP1. Binds PLXNB1. Found in certain neuronal populations of the CNS, including dorsal root ganglia, and in other non-neuronal tissues including mesenchymal tissue lining in the ribs.

Its subcellular location is the membrane. Functionally, high affinity receptor for semaphorins 3C, 3F, VEGF-165 and VEGF-145 isoforms of VEGF, and the PLGF-2 isoform of PGF. This chain is Neuropilin-2 (Nrp2), found in Rattus norvegicus (Rat).